The primary structure comprises 555 residues: Formate--tetrahydrofolate ligase (555 aa).

Residue 65–72 (TPAGEGKT) coordinates ATP.

The protein belongs to the formate--tetrahydrofolate ligase family.

The enzyme catalyses (6S)-5,6,7,8-tetrahydrofolate + formate + ATP = (6R)-10-formyltetrahydrofolate + ADP + phosphate. It functions in the pathway one-carbon metabolism; tetrahydrofolate interconversion. The polypeptide is Formate--tetrahydrofolate ligase (Thermoanaerobacter pseudethanolicus (strain ATCC 33223 / 39E) (Clostridium thermohydrosulfuricum)).